The primary structure comprises 312 residues: tRNA pseudouridine synthase B (312 aa).

Asp-47 serves as the catalytic Nucleophile.

This sequence belongs to the pseudouridine synthase TruB family. Type 1 subfamily.

It carries out the reaction uridine(55) in tRNA = pseudouridine(55) in tRNA. In terms of biological role, responsible for synthesis of pseudouridine from uracil-55 in the psi GC loop of transfer RNAs. The polypeptide is tRNA pseudouridine synthase B (Vibrio cholerae serotype O1 (strain M66-2)).